Here is a 120-residue protein sequence, read N- to C-terminus: cAMP-responsive element-binding protein-like 2 (120 aa).

The disordered stretch occupies residues 1-24; the sequence is MDDSKVVGGKVKKPGKRGRKPAKI. Basic residues predominate over residues 10-21; that stretch reads KVKKPGKRGRKP. Residues 23–86 form the bZIP domain; it reads KIDLKAKLER…MAMDQGKIPS (64 aa). Residues 29–60 form a basic motif region; it reads KLERSRQSARECRARKKLRYQYLEELVSSRER. A leucine-zipper region spans residues 62–69; the sequence is ICALREEL. A disordered region spans residues 93–120; that stretch reads TGEEQSKSQQNSSRHMKAGKTDANSNSW.

This sequence belongs to the bZIP family. ATF subfamily. Interacts with CREB1; regulates CREB1 phosphorylation, stability and transcriptional activity. Interacts with immediate-early (IE) protein BICP22 of bovine herpesvirus-1 (BHV-1). In terms of processing, phosphorylated by AMPK.

The protein resides in the nucleus. In terms of biological role, probable regulator of CREB1 transcriptional activity which is involved in adipose cells differentiation. May also play a regulatory role in the cell cycle. This is cAMP-responsive element-binding protein-like 2 (CREBL2) from Bos taurus (Bovine).